The sequence spans 608 residues: uncharacterized protein (608 aa).

The segment at 1-21 is disordered; it reads MHTNSPLRADNQDLETQPLLR. Residue threonine 24 is modified to Phosphothreonine. Serine 27 is subject to Phosphoserine. Residues 55–75 traverse the membrane as a helical segment; it reads IIYLLGIVLLSFFGVSIVQYI. N-linked (GlcNAc...) asparagine glycans are attached at residues asparagine 115, asparagine 141, asparagine 169, asparagine 407, asparagine 425, asparagine 449, asparagine 453, asparagine 527, and asparagine 580.

Its subcellular location is the membrane. This is an uncharacterized protein from Saccharomyces cerevisiae (strain ATCC 204508 / S288c) (Baker's yeast).